Consider the following 265-residue polypeptide: Bidirectional sugar transporter SWEET7b (265 aa).

Residues 1–9 (MVSPDLIRN) lie on the Extracellular side of the membrane. The chain crosses the membrane as a helical span at residues 10–30 (MVGIVGNIISFGLFLSPVPTF). The MtN3/slv 1 domain maps to 10-97 (MVGIVGNIIS…TIFFLFSDKK (88 aa)). The Cytoplasmic segment spans residues 31-45 (YRIIKNKDVQDFKAD). The chain crosses the membrane as a helical span at residues 46-66 (PYLATLLNCMLWVFYGLPIVH). Residues 67–69 (PNS) lie on the Extracellular side of the membrane. The chain crosses the membrane as a helical span at residues 70–90 (ILVVTINGIGLVIEAVYLTIF). Residues 91–101 (FLFSDKKNKKK) lie on the Cytoplasmic side of the membrane. Residues 102–122 (MGVVLATEALFMAAVVLGVLL) form a helical membrane-spanning segment. Over 123–131 (GAHTHQRRS) the chain is Extracellular. The helical transmembrane segment at 132–152 (LIVGILCVIFGTIMYSSPLTI) threads the bilayer. One can recognise a MtN3/slv 2 domain in the interval 133–215 (IVGILCVIFG…QLILYAIYYR (83 aa)). The Cytoplasmic portion of the chain corresponds to 153-165 (MSQVVKTKSVEYM). A helical membrane pass occupies residues 166–186 (PLLLSVVSFLNGLCWTSYALI). Residues 187 to 189 (RLD) lie on the Extracellular side of the membrane. The chain crosses the membrane as a helical span at residues 190–210 (IFITIPNGLGVLFALMQLILY). The Cytoplasmic portion of the chain corresponds to 211–265 (AIYYRTIPKKQDKNLELPTVAPVAKDTSIVTPVSKDDDVDGGNASHVTINITIEL).

The protein belongs to the SWEET sugar transporter family. Forms homooligomers and/or heterooligomers.

The protein localises to the cell membrane. Its function is as follows. Mediates both low-affinity uptake and efflux of sugar across the plasma membrane. This is Bidirectional sugar transporter SWEET7b (SWEET7B) from Oryza sativa subsp. japonica (Rice).